The chain runs to 363 residues: Spermidine/putrescine import ATP-binding protein PotA 2 (363 aa).

The 231-residue stretch at 6–236 folds into the ABC transporter domain; the sequence is LEIRNVTRRF…PRSRFVADFI (231 aa). ATP is bound at residue 38 to 45; the sequence is GPSGCGKT.

The protein belongs to the ABC transporter superfamily. Spermidine/putrescine importer (TC 3.A.1.11.1) family. As to quaternary structure, the complex is composed of two ATP-binding proteins (PotA), two transmembrane proteins (PotB and PotC) and a solute-binding protein (PotD).

It is found in the cell inner membrane. It carries out the reaction ATP + H2O + polyamine-[polyamine-binding protein]Side 1 = ADP + phosphate + polyamineSide 2 + [polyamine-binding protein]Side 1.. Functionally, part of the ABC transporter complex PotABCD involved in spermidine/putrescine import. Responsible for energy coupling to the transport system. This chain is Spermidine/putrescine import ATP-binding protein PotA 2, found in Pseudomonas aeruginosa (strain ATCC 15692 / DSM 22644 / CIP 104116 / JCM 14847 / LMG 12228 / 1C / PRS 101 / PAO1).